We begin with the raw amino-acid sequence, 289 residues long: Probable ABC transporter permease protein BruAb2_0483 (289 aa).

A run of 6 helical transmembrane segments spans residues 9–29 (FLIL…VVHL), 70–90 (VWTV…AIIL), 99–119 (VARV…AIFW), 144–166 (IQWL…LVTV), 213–233 (IAIV…WVMT), and 258–278 (FGEA…FTVI). Positions 65–279 (LWRTAVWTVA…AILLVFTVIY (215 aa)) constitute an ABC transmembrane type-1 domain.

The protein belongs to the binding-protein-dependent transport system permease family. The complex is composed of two ATP-binding proteins (BruAb2_0487), two transmembrane proteins (BruAb2_0483) and a solute-binding protein (BruAb2_0484).

The protein resides in the cell inner membrane. Probably part of an ABC transporter complex. Probably responsible for the translocation of the substrate across the membrane. In Brucella abortus biovar 1 (strain 9-941), this protein is Probable ABC transporter permease protein BruAb2_0483.